We begin with the raw amino-acid sequence, 318 residues long: ADP-ribosyl cyclase/cyclic ADP-ribose hydrolase 2 (318 aa).

Positions Met-1–Ala-32 are cleaved as a signal peptide. Cystine bridges form between Cys-51/Cys-67, Cys-83/Cys-163, and Cys-144/Cys-157. N-linked (GlcNAc...) asparagine glycosylation is found at Asn-66 and Asn-95. Residue Trp-109 participates in NAD(+) binding. Trp-109 contributes to the nicotinamide binding site. Asn-148 is a glycosylation site (N-linked (GlcNAc...) asparagine). Residue Trp-172 participates in NAD(+) binding. Asn-192 carries N-linked (GlcNAc...) asparagine glycosylation. Glu-210 provides a ligand contact to NAD(+). 2 disulfides stabilise this stretch: Cys-238/Cys-259 and Cys-271/Cys-280. Ala-293 is lipidated: GPI-anchor amidated alanine. The propeptide at Pro-294–Leu-318 is removed in mature form.

Belongs to the ADP-ribosyl cyclase family. In terms of assembly, homodimer. As to expression, expressed in various tissues including placenta, lung, liver and kidney.

Its subcellular location is the cell membrane. It catalyses the reaction NAD(+) + H2O = ADP-D-ribose + nicotinamide + H(+). It carries out the reaction NAD(+) = cyclic ADP-beta-D-ribose + nicotinamide + H(+). The catalysed reaction is cyclic ADP-beta-D-ribose + H2O = ADP-D-ribose. With respect to regulation, ADP-ribosyl cyclase and cADPR hydrolase activities are both activated by Zn(2+) or Mn(2+), and inhibited by Cu(2+), while Mg(2+) and Ca(2+) do not have any significant influence. Catalyzes both the synthesis of cyclic ADP-beta-D-ribose (cADPR) from NAD(+), and its hydrolysis to ADP-D-ribose (ADPR). Cyclic ADPR is known to serve as an endogenous second messenger that elicits calcium release from intracellular stores, and thus regulates the mobilization of intracellular calcium. May be involved in pre-B-cell growth. The protein is ADP-ribosyl cyclase/cyclic ADP-ribose hydrolase 2 (BST1) of Homo sapiens (Human).